The sequence spans 450 residues: 3-phosphoshikimate 1-carboxyvinyltransferase (450 aa).

Residues K28, S29, and R33 each coordinate 3-phosphoshikimate. Residue K28 coordinates phosphoenolpyruvate. Phosphoenolpyruvate-binding residues include G100 and R128. 3-phosphoshikimate is bound by residues S173, Q175, D326, and K353. Q175 is a phosphoenolpyruvate binding site. D326 acts as the Proton acceptor in catalysis. R357 and R402 together coordinate phosphoenolpyruvate.

This sequence belongs to the EPSP synthase family. As to quaternary structure, monomer.

It is found in the cytoplasm. It carries out the reaction 3-phosphoshikimate + phosphoenolpyruvate = 5-O-(1-carboxyvinyl)-3-phosphoshikimate + phosphate. It functions in the pathway metabolic intermediate biosynthesis; chorismate biosynthesis; chorismate from D-erythrose 4-phosphate and phosphoenolpyruvate: step 6/7. Its function is as follows. Catalyzes the transfer of the enolpyruvyl moiety of phosphoenolpyruvate (PEP) to the 5-hydroxyl of shikimate-3-phosphate (S3P) to produce enolpyruvyl shikimate-3-phosphate and inorganic phosphate. In Brucella canis (strain ATCC 23365 / NCTC 10854 / RM-666), this protein is 3-phosphoshikimate 1-carboxyvinyltransferase.